A 132-amino-acid polypeptide reads, in one-letter code: SH2 domain-containing protein 1B (132 aa).

Residues 5 to 101 (YYHGRLTKQD…GMVVHLLKPI (97 aa)) enclose the SH2 domain. Position 127 is a phosphotyrosine (Y127).

In terms of assembly, binds to the phosphorylated receptors CD84, SLAMF1, LY9 and CD244. Does not bind to non-phosphorylated SLAMF1. Interacts with SLAMF7 (via ITSM phosphorylated on 'Tyr-304'). Interacts with Src kinases HCK, LYN, FYN, FGR and LCK (via kinase domains). Interacts (phosphorylated at Tyr-127) with PLCG1.

Cytoplasmic adapter regulating receptors of the signaling lymphocytic activation molecule (SLAM) family such as CD84, SLAMF1, LY9 and CD244. In SLAM signaling seems to cooperate with SH2D1A/SAP. Plays a role in regulation of effector functions of natural killer (NK) cells by controlling signal transduction through CD244/2B4 without effecting its tyrosine phosphorylation; downstream signaling involves PLCG1 and ERK activation. Activation of SLAMF7-mediated NK cell function does not effect receptor tyrosine phosphorylation but distal signaling. In the context of NK cell-mediated cytotoxicity does not enhance conjugate formation with target cells but stimulates polarization of the microtubule-organizing center and cytotoxic granules toward the NK cell synapse. Negatively regulates CD40-induced cytokine production in dendritic cells downstream of SLAM family receptors probably by inducing activation of the PI3K pathway to inhibit p38 MAPK and JNK activation. The sequence is that of SH2 domain-containing protein 1B (SH2D1B) from Homo sapiens (Human).